The following is a 216-amino-acid chain: Phosphoribosylformylglycinamidine synthase subunit PurQ (216 aa).

The region spanning 2 to 216 (SIGVIVFPGS…GRRMLEALLG (215 aa)) is the Glutamine amidotransferase type-1 domain. The Nucleophile role is filled by C86. Active-site residues include H193 and E195.

In terms of assembly, part of the FGAM synthase complex composed of 1 PurL, 1 PurQ and 2 PurS subunits.

It is found in the cytoplasm. It catalyses the reaction N(2)-formyl-N(1)-(5-phospho-beta-D-ribosyl)glycinamide + L-glutamine + ATP + H2O = 2-formamido-N(1)-(5-O-phospho-beta-D-ribosyl)acetamidine + L-glutamate + ADP + phosphate + H(+). It carries out the reaction L-glutamine + H2O = L-glutamate + NH4(+). The protein operates within purine metabolism; IMP biosynthesis via de novo pathway; 5-amino-1-(5-phospho-D-ribosyl)imidazole from N(2)-formyl-N(1)-(5-phospho-D-ribosyl)glycinamide: step 1/2. In terms of biological role, part of the phosphoribosylformylglycinamidine synthase complex involved in the purines biosynthetic pathway. Catalyzes the ATP-dependent conversion of formylglycinamide ribonucleotide (FGAR) and glutamine to yield formylglycinamidine ribonucleotide (FGAM) and glutamate. The FGAM synthase complex is composed of three subunits. PurQ produces an ammonia molecule by converting glutamine to glutamate. PurL transfers the ammonia molecule to FGAR to form FGAM in an ATP-dependent manner. PurS interacts with PurQ and PurL and is thought to assist in the transfer of the ammonia molecule from PurQ to PurL. This Synechococcus sp. (strain CC9605) protein is Phosphoribosylformylglycinamidine synthase subunit PurQ.